A 234-amino-acid chain; its full sequence is Phosphoribosylaminoimidazole-succinocarboxamide synthase (234 aa).

The protein belongs to the SAICAR synthetase family.

The catalysed reaction is 5-amino-1-(5-phospho-D-ribosyl)imidazole-4-carboxylate + L-aspartate + ATP = (2S)-2-[5-amino-1-(5-phospho-beta-D-ribosyl)imidazole-4-carboxamido]succinate + ADP + phosphate + 2 H(+). It functions in the pathway purine metabolism; IMP biosynthesis via de novo pathway; 5-amino-1-(5-phospho-D-ribosyl)imidazole-4-carboxamide from 5-amino-1-(5-phospho-D-ribosyl)imidazole-4-carboxylate: step 1/2. This chain is Phosphoribosylaminoimidazole-succinocarboxamide synthase, found in Clostridium botulinum (strain Langeland / NCTC 10281 / Type F).